The primary structure comprises 112 residues: T cell receptor alpha variable 13-1 (112 aa).

The N-terminal stretch at 1-20 (MTSIRAVFIFLWLQLDLVNG) is a signal peptide. Residues 21 to 112 (ENVEQHPSTL…DSAVYFCAAS (92 aa)) enclose the Ig-like domain. An intrachain disulfide couples cysteine 42 to cysteine 109. Residue asparagine 86 is glycosylated (N-linked (GlcNAc...) asparagine).

In terms of assembly, alpha-beta TR is a heterodimer composed of an alpha and beta chain; disulfide-linked. The alpha-beta TR is associated with the transmembrane signaling CD3 coreceptor proteins to form the TR-CD3 (TcR or TCR). The assembly of alpha-beta TR heterodimers with CD3 occurs in the endoplasmic reticulum where a single alpha-beta TR heterodimer associates with one CD3D-CD3E heterodimer, one CD3G-CD3E heterodimer and one CD247 homodimer forming a stable octameric structure. CD3D-CD3E and CD3G-CD3E heterodimers preferentially associate with TR alpha and TR beta chains, respectively. The association of the CD247 homodimer is the last step of TcR assembly in the endoplasmic reticulum and is required for transport to the cell surface.

The protein localises to the cell membrane. In terms of biological role, v region of the variable domain of T cell receptor (TR) alpha chain that participates in the antigen recognition. Alpha-beta T cell receptors are antigen specific receptors which are essential to the immune response and are present on the cell surface of T lymphocytes. Recognize peptide-major histocompatibility (MH) (pMH) complexes that are displayed by antigen presenting cells (APC), a prerequisite for efficient T cell adaptive immunity against pathogens. Binding of alpha-beta TR to pMH complex initiates TR-CD3 clustering on the cell surface and intracellular activation of LCK that phosphorylates the ITAM motifs of CD3G, CD3D, CD3E and CD247 enabling the recruitment of ZAP70. In turn ZAP70 phosphorylates LAT, which recruits numerous signaling molecules to form the LAT signalosome. The LAT signalosome propagates signal branching to three major signaling pathways, the calcium, the mitogen-activated protein kinase (MAPK) kinase and the nuclear factor NF-kappa-B (NF-kB) pathways, leading to the mobilization of transcription factors that are critical for gene expression and essential for T cell growth and differentiation. The T cell repertoire is generated in the thymus, by V-(D)-J rearrangement. This repertoire is then shaped by intrathymic selection events to generate a peripheral T cell pool of self-MH restricted, non-autoaggressive T cells. Post-thymic interaction of alpha-beta TR with the pMH complexes shapes TR structural and functional avidity. This Homo sapiens (Human) protein is T cell receptor alpha variable 13-1.